Consider the following 68-residue polypeptide: Small ribosomal subunit protein bS21 (68 aa).

Residues 36–68 (YEKPSEKRARERAAAVRRSRKLERKRAERDGIR) form a disordered region. Positions 37 to 49 (EKPSEKRARERAA) are enriched in basic and acidic residues. A compositionally biased stretch (basic residues) spans 50–59 (AVRRSRKLER).

It belongs to the bacterial ribosomal protein bS21 family.

This is Small ribosomal subunit protein bS21 from Zymomonas mobilis subsp. mobilis (strain ATCC 31821 / ZM4 / CP4).